A 276-amino-acid polypeptide reads, in one-letter code: tRNA dimethylallyltransferase (276 aa).

Residues 9–12 (DSLS) form an interaction with substrate tRNA region.

Belongs to the IPP transferase family. In terms of assembly, monomer. It depends on Mg(2+) as a cofactor.

It catalyses the reaction adenosine(37) in tRNA + dimethylallyl diphosphate = N(6)-dimethylallyladenosine(37) in tRNA + diphosphate. Catalyzes the transfer of a dimethylallyl group onto the adenine at position 37 in tRNAs that read codons beginning with uridine, leading to the formation of N6-(dimethylallyl)adenosine (i(6)A). This is tRNA dimethylallyltransferase (miaA) from Helicobacter pylori (strain G27).